Consider the following 426-residue polypeptide: Glutamyl-tRNA(Gln) amidotransferase subunit D (426 aa).

Residues 82–413 enclose the Asparaginase/glutaminase domain; it reads KNISILSTGG…KDAKKLICKN (332 aa). Residues Thr-92, Thr-168, Asp-169, and Lys-245 contribute to the active site.

This sequence belongs to the asparaginase 1 family. GatD subfamily. In terms of assembly, heterodimer of GatD and GatE.

The catalysed reaction is L-glutamyl-tRNA(Gln) + L-glutamine + ATP + H2O = L-glutaminyl-tRNA(Gln) + L-glutamate + ADP + phosphate + H(+). Its function is as follows. Allows the formation of correctly charged Gln-tRNA(Gln) through the transamidation of misacylated Glu-tRNA(Gln) in organisms which lack glutaminyl-tRNA synthetase. The reaction takes place in the presence of glutamine and ATP through an activated gamma-phospho-Glu-tRNA(Gln). The GatDE system is specific for glutamate and does not act on aspartate. In Methanococcus vannielii (strain ATCC 35089 / DSM 1224 / JCM 13029 / OCM 148 / SB), this protein is Glutamyl-tRNA(Gln) amidotransferase subunit D.